The sequence spans 600 residues: Integrator complex subunit 11 (600 aa).

Histidine 68, histidine 70, aspartate 72, histidine 73, histidine 157, and aspartate 178 together coordinate Zn(2+). An HXHXDH motif motif is present at residues 68–73 (HFHLDH). Glutamate 203 is a catalytic residue. Lysine 381 is covalently cross-linked (Glycyl lysine isopeptide (Lys-Gly) (interchain with G-Cter in SUMO)). Histidine 414 contributes to the Zn(2+) binding site. Glycyl lysine isopeptide (Lys-Gly) (interchain with G-Cter in SUMO) cross-links involve residues lysine 462 and lysine 475. Positions 469 to 479 (LLPEAKKPRLL) match the Nuclear localization signal motif.

It belongs to the metallo-beta-lactamase superfamily. RNA-metabolizing metallo-beta-lactamase-like family. INTS11 subfamily. In terms of assembly, component of the Integrator complex, composed of core subunits INTS1, INTS2, INTS3, INTS4, INTS5, INTS6, INTS7, INTS8, INTS9/RC74, INTS10, INTS11/CPSF3L, INTS12, INTS13, INTS14 and INTS15. The core complex associates with protein phosphatase 2A subunits PPP2CA and PPP2R1A, to form the Integrator-PP2A (INTAC) complex. INTS11 is part of the RNA endonuclease subcomplex, composed of INTS4, INTS9, INTS11 and inositol hexakisphosphate (InsP6). Interacts with WDR73; interaction is required for the assembly of the RNA endonuclease subcomplex in the cytoplasm. Interacts with BRAT1; interaction is required for the assembly of the RNA endonuclease subcomplex and inhibits the endonuclease activity of INTS11 before formation of mature integrator complex. It depends on Zn(2+) as a cofactor. Sumoylated; sumoylation regulates its subcellular location and is required for integrator complex integrity.

It localises to the nucleus. The protein resides in the cytoplasm. The RNA endonuclease activity is inhibited by BRAT1 that forms hyrogen bond and hydrophobic interactions with the active site. Its function is as follows. RNA endonuclease component of the integrator complex, a multiprotein complex that terminates RNA polymerase II (Pol II) transcription in the promoter-proximal region of genes. The integrator complex provides a quality checkpoint during transcription elongation by driving premature transcription termination of transcripts that are unfavorably configured for transcriptional elongation: the complex terminates transcription by (1) catalyzing dephosphorylation of the C-terminal domain (CTD) of Pol II subunit POLR2A/RPB1 and SUPT5H/SPT5, (2) degrading the exiting nascent RNA transcript via endonuclease activity and (3) promoting the release of Pol II from bound DNA. The integrator complex is also involved in terminating the synthesis of non-coding Pol II transcripts, such as enhancer RNAs (eRNAs), small nuclear RNAs (snRNAs), telomerase RNAs and long non-coding RNAs (lncRNAs). Within the integrator complex, INTS11 constitutes the RNA endonuclease subunit that degrades exiting nascent RNA transcripts. Mediates recruitment of cytoplasmic dynein to the nuclear envelope, probably as component of the integrator complex. The polypeptide is Integrator complex subunit 11 (INTS11) (Pongo abelii (Sumatran orangutan)).